Reading from the N-terminus, the 927-residue chain is Translation initiation factor IF-2 (927 aa).

A disordered region spans residues 27 to 338 (LGLPVKSHAS…APKPVTERKF (312 aa)). Residues 49-69 (SFSSSKTKAPTNSVQTNQGVK) show a composition bias toward polar residues. Basic and acidic residues-rich tracts occupy residues 70 to 86 (TESK…DDKP) and 101 to 138 (FKAE…DRRH). The span at 146–159 (GNRNDNRQGQQNNR) shows a compositional bias: low complexity. Basic and acidic residues-rich tracts occupy residues 160–171 (NKNDGRYADHKQ), 202–226 (YSRH…EQEL), and 234–257 (AQEE…KEIV). Residues 300–316 (NWNNQNQVRNQRNSNWN) are compositionally biased toward low complexity. The region spanning 428–597 (ERPPVVTIMG…LLVAEMEELK (170 aa)) is the tr-type G domain. The interval 437 to 444 (GHVDHGKT) is G1. 437–444 (GHVDHGKT) provides a ligand contact to GTP. The segment at 462–466 (GITQH) is G2. The interval 483 to 486 (DTPG) is G3. GTP-binding positions include 483–487 (DTPGH) and 537–540 (NKID). The interval 537–540 (NKID) is G4. Positions 573–575 (SAK) are G5.

The protein belongs to the TRAFAC class translation factor GTPase superfamily. Classic translation factor GTPase family. IF-2 subfamily.

It localises to the cytoplasm. In terms of biological role, one of the essential components for the initiation of protein synthesis. Protects formylmethionyl-tRNA from spontaneous hydrolysis and promotes its binding to the 30S ribosomal subunits. Also involved in the hydrolysis of GTP during the formation of the 70S ribosomal complex. This Streptococcus agalactiae serotype Ia (strain ATCC 27591 / A909 / CDC SS700) protein is Translation initiation factor IF-2.